The following is a 410-amino-acid chain: Adenosine receptor A2a (410 aa).

Residues 1 to 4 (MGSS) lie on the Extracellular side of the membrane. Residues 5 to 29 (VYIMVELAIAVLAILGNVLVCWAVW) form a helical membrane-spanning segment. Over 30 to 39 (INSNLQNVTN) the chain is Cytoplasmic. A helical transmembrane segment spans residues 40–63 (FFVVSLAAADIAVGVLAIPFAITI). The Extracellular segment spans residues 64-74 (STGFCAACHGC). 3 disulfide bridges follow: Cys-68–Cys-154, Cys-71–Cys-143, and Cys-74–Cys-161. A helical membrane pass occupies residues 75–97 (LFFACFVLVLTQSSIFSLLAIAI). At 98 to 117 (DRYIAIRIPLRYNGLVTGMR) the chain is on the cytoplasmic side. The chain crosses the membrane as a helical span at residues 118 to 140 (AKGIIAICWVLSFAIGLTPMLGW). Over 141 to 168 (NNCSQKDENSTKTCGEGRVTCLFEDVVP) the chain is Extracellular. N-linked (GlcNAc...) asparagine glycans are attached at residues Asn-142 and Asn-149. Position 164 (Glu-164) interacts with adenosine. A helical membrane pass occupies residues 169–193 (MNYMVYYNFFAFVLLPLLLMLAIYL). Residues 194 to 229 (RIFLAARRQLKQMESQPLPGERTRSTLQKEVHAAKS) lie on the Cytoplasmic side of the membrane. The chain crosses the membrane as a helical span at residues 230–253 (LAIIVGLFALCWLPLHIINCFTFF). Position 248 (Asn-248) interacts with adenosine. A disulfide bridge connects residues Cys-254 and Cys-257. Residues 254–261 (CSTCQHAP) are Extracellular-facing. A helical transmembrane segment spans residues 262–285 (PWLMYLAIILSHSNSVVNPFIYAY). Residues Ser-272 and His-273 each contribute to the adenosine site. The Cytoplasmic segment spans residues 286 to 410 (RIREFRQTFR…ASWSSEFAPS (125 aa)). The segment at 322–410 (HSTEGEQVSL…ASWSSEFAPS (89 aa)) is interaction with GAS2L2. The interval 342 to 410 (ANGSAPHSGR…ASWSSEFAPS (69 aa)) is disordered. The segment covering 377–389 (TQEHQEGQEHPGL) has biased composition (basic and acidic residues). Polar residues predominate over residues 401 to 410 (ASWSSEFAPS).

Belongs to the G-protein coupled receptor 1 family. Interacts (via cytoplasmic C-terminal domain) with USP4; the interaction is direct. May interact with DRD4. Interacts with NECAB2. Interacts (via cytoplasmic C-terminal domain) with GAS2L2; interaction enhances receptor-mediated adenylyl cyclase activity. Post-translationally, ubiquitinated. Deubiquitinated by USP4; leading to stabilization and expression at the cell surface.

Its subcellular location is the cell membrane. In terms of biological role, receptor for adenosine. The activity of this receptor is mediated by G proteins which activate adenylyl cyclase. The sequence is that of Adenosine receptor A2a (Adora2a) from Mus musculus (Mouse).